Consider the following 492-residue polypeptide: Argininosuccinate lyase (492 aa).

It belongs to the lyase 1 family. Argininosuccinate lyase subfamily.

It is found in the cytoplasm. The catalysed reaction is 2-(N(omega)-L-arginino)succinate = fumarate + L-arginine. Its pathway is amino-acid biosynthesis; L-arginine biosynthesis; L-arginine from L-ornithine and carbamoyl phosphate: step 3/3. The sequence is that of Argininosuccinate lyase from Methanocorpusculum labreanum (strain ATCC 43576 / DSM 4855 / Z).